The primary structure comprises 258 residues: Triosephosphate isomerase (258 aa).

Residue N9–K11 participates in substrate binding. H95 (electrophile) is an active-site residue. The Proton acceptor role is filled by E167. Residues G173 and S212 each coordinate substrate.

This sequence belongs to the triosephosphate isomerase family. In terms of assembly, homodimer.

The protein resides in the cytoplasm. It carries out the reaction D-glyceraldehyde 3-phosphate = dihydroxyacetone phosphate. Its pathway is carbohydrate biosynthesis; gluconeogenesis. The protein operates within carbohydrate degradation; glycolysis; D-glyceraldehyde 3-phosphate from glycerone phosphate: step 1/1. Functionally, involved in the gluconeogenesis. Catalyzes stereospecifically the conversion of dihydroxyacetone phosphate (DHAP) to D-glyceraldehyde-3-phosphate (G3P). This chain is Triosephosphate isomerase, found in Blochmanniella pennsylvanica (strain BPEN).